A 125-amino-acid chain; its full sequence is Phosphoribosyl-AMP cyclohydrolase (125 aa).

D74 contacts Mg(2+). C75 serves as a coordination point for Zn(2+). D76 and D78 together coordinate Mg(2+). C92 and C99 together coordinate Zn(2+).

It belongs to the PRA-CH family. Homodimer. Mg(2+) is required as a cofactor. It depends on Zn(2+) as a cofactor.

It localises to the cytoplasm. The catalysed reaction is 1-(5-phospho-beta-D-ribosyl)-5'-AMP + H2O = 1-(5-phospho-beta-D-ribosyl)-5-[(5-phospho-beta-D-ribosylamino)methylideneamino]imidazole-4-carboxamide. It participates in amino-acid biosynthesis; L-histidine biosynthesis; L-histidine from 5-phospho-alpha-D-ribose 1-diphosphate: step 3/9. Its function is as follows. Catalyzes the hydrolysis of the adenine ring of phosphoribosyl-AMP. The sequence is that of Phosphoribosyl-AMP cyclohydrolase from Geobacter metallireducens (strain ATCC 53774 / DSM 7210 / GS-15).